We begin with the raw amino-acid sequence, 227 residues long: MFLNEKVGAVIVAAGQSRRMEGQDKIFALLAGKPVLAHTLSVFQESPQVDDIALVMAEHNIEKAKELVKEYNFSKVIAICSGGTLRQDSVRSGLSALCDCGWILIHDGARPLLEPDSIPEGLEAAKLCGSAIAAVPLKDTIKEISPEGLVEKTLPRERLISVQTPQVFRADIIQKAYQRVGIIATDDAQLVEKLKLPVRIFSGACANIKITTPEDLLMAEILLKKGR.

This sequence belongs to the IspD/TarI cytidylyltransferase family. IspD subfamily.

It catalyses the reaction 2-C-methyl-D-erythritol 4-phosphate + CTP + H(+) = 4-CDP-2-C-methyl-D-erythritol + diphosphate. It functions in the pathway isoprenoid biosynthesis; isopentenyl diphosphate biosynthesis via DXP pathway; isopentenyl diphosphate from 1-deoxy-D-xylulose 5-phosphate: step 2/6. Functionally, catalyzes the formation of 4-diphosphocytidyl-2-C-methyl-D-erythritol from CTP and 2-C-methyl-D-erythritol 4-phosphate (MEP). This Dehalococcoides mccartyi (strain CBDB1) protein is 2-C-methyl-D-erythritol 4-phosphate cytidylyltransferase.